The sequence spans 1847 residues: Cilia- and flagella-associated protein 65 (1847 aa).

A helical transmembrane segment spans residues 112-132 (FFTIIPQPIFLSPGITLTLPI). The 110-residue stretch at 805-914 (DLKLDTHKSI…VHYRIRLVGM (110 aa)) folds into the MSP domain. Residues 1457 to 1483 (QRELMRQYHKELQEWNEEKARQEVEFT) adopt a coiled-coil conformation. The tract at residues 1668–1721 (YEGRKSKEQEEDLFGKMPGGQEDDEEEEEDEEEAEEEEEEIEEEMSKDEEDIDK) is disordered. Acidic residues predominate over residues 1688-1720 (QEDDEEEEEDEEEAEEEEEEIEEEMSKDEEDID).

Belongs to the CFAP65 family. In terms of assembly, interacts with CFAP47. Predominantly expressed in testis. Highly expressed in round and elongating spermatids. Expressed also in certain ciliated organs, such as the brain, lung and kidney.

The protein resides in the cell projection. It is found in the cilium. Its subcellular location is the flagellum membrane. It localises to the cytoplasmic vesicle. The protein localises to the secretory vesicle. The protein resides in the acrosome membrane. It is found in the cytoplasm. Functionally, plays a role in flagellar formation and sperm motility. The polypeptide is Cilia- and flagella-associated protein 65 (Mus musculus (Mouse)).